The primary structure comprises 199 residues: NAD(P)H dehydrogenase (quinone) (199 aa).

Positions 4–190 (VLVLYYSAYG…AGARYQGRVI (187 aa)) constitute a Flavodoxin-like domain. FMN is bound by residues 10–15 (SAYGHI) and 78–80 (TRF). Y12 lines the NAD(+) pocket. Residue W98 participates in substrate binding. FMN-binding positions include 113–119 (STATQHG) and H134.

It belongs to the WrbA family. FMN serves as cofactor.

The enzyme catalyses a quinone + NADH + H(+) = a quinol + NAD(+). It carries out the reaction a quinone + NADPH + H(+) = a quinol + NADP(+). This is NAD(P)H dehydrogenase (quinone) from Bradyrhizobium sp. (strain BTAi1 / ATCC BAA-1182).